Reading from the N-terminus, the 501-residue chain is Acetylcholine receptor subunit beta (501 aa).

The N-terminal stretch at 1–23 (MALGALLLILGILGTPLAPGARG) is a signal peptide. The Extracellular segment spans residues 24–244 (SEAEGQLLKK…VIFYLIIRRK (221 aa)). The cysteines at positions 151 and 165 are disulfide-linked. N-linked (GlcNAc...) asparagine glycosylation is present at N164. Transmembrane regions (helical) follow at residues 245 to 269 (PLFYLVNVIAPCILITLLAIFVFYL), 277 to 295 (MGLSIFALLTLTVFLLLLA), and 311 to 332 (YLMFTMILVTFSVILSVVVLNL). The Cytoplasmic portion of the chain corresponds to 333–469 (HHRSPHTHQM…WQFVAMVVDR (137 aa)). Positions 362–381 (RPKPERDQLPEPHHSFSPRS) are disordered. Positions 363 to 375 (PKPERDQLPEPHH) are enriched in basic and acidic residues. Y390 is modified (phosphotyrosine; by Tyr-kinases). The chain crosses the membrane as a helical span at residues 470–488 (LFLWTFIVFTSVGTLVIFL).

Belongs to the ligand-gated ion channel (TC 1.A.9) family. Acetylcholine receptor (TC 1.A.9.1) subfamily. Beta-1/CHRNB1 sub-subfamily. In terms of assembly, pentamer of two alpha chains, and one each of the beta, delta, and gamma (in immature muscle) or epsilon (in mature muscle) chains. The muscle heteropentamer composed of alpha-1, beta-1, delta, epsilon subunits interacts with the alpha-conotoxin ImII.

The protein localises to the postsynaptic cell membrane. Its subcellular location is the cell membrane. It catalyses the reaction K(+)(in) = K(+)(out). It carries out the reaction Na(+)(in) = Na(+)(out). After binding acetylcholine, the AChR responds by an extensive change in conformation that affects all subunits and leads to opening of an ion-conducting channel across the plasma membrane. The polypeptide is Acetylcholine receptor subunit beta (Chrnb1) (Rattus norvegicus (Rat)).